Reading from the N-terminus, the 504-residue chain is Cytochrome P450 3A2 (504 aa).

C443 contributes to the heme binding site.

Belongs to the cytochrome P450 family. The cofactor is heme. In terms of tissue distribution, expressed in liver.

It is found in the endoplasmic reticulum membrane. The protein localises to the microsome membrane. It carries out the reaction an organic molecule + reduced [NADPH--hemoprotein reductase] + O2 = an alcohol + oxidized [NADPH--hemoprotein reductase] + H2O + H(+). Its function is as follows. Cytochromes P450 are a group of heme-thiolate monooxygenases. In liver microsomes, this enzyme is involved in an NADPH-dependent electron transport pathway. It oxidizes a variety of structurally unrelated compounds, including steroids, fatty acids, and xenobiotics. The sequence is that of Cytochrome P450 3A2 (Cyp3a2) from Rattus norvegicus (Rat).